Reading from the N-terminus, the 376-residue chain is Carbohydrate sulfotransferase 14 (376 aa).

Positions 1-30 (MFPRPLTPLAAPKSAETLGRTPRRAPLGRA) are disordered. Residues 1–39 (MFPRPLTPLAAPKSAETLGRTPRRAPLGRARAGLGGPPL) are Cytoplasmic-facing. The span at 18 to 30 (LGRTPRRAPLGRA) shows a compositional bias: low complexity. The helical; Signal-anchor for type II membrane protein transmembrane segment at 40 to 60 (LLPSMLMFAVIVASSGLLLMI) threads the bilayer. The Lumenal segment spans residues 61–376 (ERGILSEMKP…PNVTKEACHQ (316 aa)). The disordered stretch occupies residues 76-96 (PSHKGAAWSGTDPKPRGLSLD). N-linked (GlcNAc...) asparagine glycosylation occurs at asparagine 110. 3'-phosphoadenylyl sulfate-binding positions include 155-161 (PKVACSN) and 213-221 (RDPLERLLS). Residue asparagine 368 is glycosylated (N-linked (GlcNAc...) asparagine).

Belongs to the sulfotransferase 2 family.

It localises to the golgi apparatus membrane. The enzyme catalyses dermatan + n 3'-phosphoadenylyl sulfate = dermatan 4'-sulfate + n adenosine 3',5'-bisphosphate + n H(+). In terms of biological role, catalyzes the transfer of sulfate to position 4 of the N-acetylgalactosamine (GalNAc) residue of dermatan sulfate. Plays a pivotal role in the formation of 4-0-sulfated IdoA blocks in dermatan sulfate. Transfers sulfate to the C-4 hydroxyl of beta1,4-linked GalNAc that is substituted with an alpha-linked iduronic acid (IdoUA) at the C-3 hydroxyl. Transfers sulfate more efficiently to GalNAc residues in -IdoUA-GalNAc-IdoUA- than in -GlcUA-GalNAc-GlcUA-sequences. Has preference for partially desulfated dermatan sulfate. Addition of sulfate to GalNAc may occur immediately after epimerization of GlcUA to IdoUA. Appears to have an important role in the formation of the cerebellar neural network during postnatal brain development. The polypeptide is Carbohydrate sulfotransferase 14 (Chst14) (Mus musculus (Mouse)).